Here is a 410-residue protein sequence, read N- to C-terminus: 3-phosphoshikimate 1-carboxyvinyltransferase (410 aa).

3-phosphoshikimate is bound by residues Lys-21, Ser-22, and Arg-26. Residue Lys-21 coordinates phosphoenolpyruvate. The phosphoenolpyruvate site is built by Gly-69 and Arg-97. 3-phosphoshikimate is bound by residues Ser-143, Ser-144, Gln-145, Ser-171, Asp-288, and Lys-315. Gln-145 lines the phosphoenolpyruvate pocket. Catalysis depends on Asp-288, which acts as the Proton acceptor. Phosphoenolpyruvate contacts are provided by Arg-319, Arg-364, and Lys-389.

Belongs to the EPSP synthase family. Monomer.

It localises to the cytoplasm. It carries out the reaction 3-phosphoshikimate + phosphoenolpyruvate = 5-O-(1-carboxyvinyl)-3-phosphoshikimate + phosphate. The protein operates within metabolic intermediate biosynthesis; chorismate biosynthesis; chorismate from D-erythrose 4-phosphate and phosphoenolpyruvate: step 6/7. Catalyzes the transfer of the enolpyruvyl moiety of phosphoenolpyruvate (PEP) to the 5-hydroxyl of shikimate-3-phosphate (S3P) to produce enolpyruvyl shikimate-3-phosphate and inorganic phosphate. This chain is 3-phosphoshikimate 1-carboxyvinyltransferase, found in Bacteroides fragilis (strain ATCC 25285 / DSM 2151 / CCUG 4856 / JCM 11019 / LMG 10263 / NCTC 9343 / Onslow / VPI 2553 / EN-2).